The primary structure comprises 338 residues: Stage V sporulation protein AD (338 aa).

This is Stage V sporulation protein AD (spoVAD) from Bacillus subtilis (strain 168).